The chain runs to 224 residues: Ribonuclease HII (224 aa).

An RNase H type-2 domain is found at 17–201 (GTVIGVDEAG…VLSNLSVKKV (185 aa)). A divalent metal cation contacts are provided by Asp23, Glu24, and Asp111.

It belongs to the RNase HII family. The cofactor is Mn(2+). Mg(2+) serves as cofactor.

It is found in the cytoplasm. The enzyme catalyses Endonucleolytic cleavage to 5'-phosphomonoester.. Functionally, endonuclease that specifically degrades the RNA of RNA-DNA hybrids. This chain is Ribonuclease HII, found in Pseudothermotoga lettingae (strain ATCC BAA-301 / DSM 14385 / NBRC 107922 / TMO) (Thermotoga lettingae).